The primary structure comprises 610 residues: Membrane protein insertase YidC (610 aa).

A helical membrane pass occupies residues 7–27 (FFITIALSILILALWQVFYLG). The segment at 36–82 (QARIEEQQRQAQQAAQNRQASSSTGDTPQMPANPDSIPGQGDTKAAG) is disordered. The span at 44–55 (RQAQQAAQNRQA) shows a compositional bias: low complexity. Helical transmembrane passes span 358-378 (FDLLIDWGWFYFITKPMFYLI), 387-407 (NFGVAILVVTVLLKALFFPLA), 458-478 (WPVLVQIPVFFALYKVLYVTI), 510-530 (TVPHFLMIGVWPIIMGIIMFL), and 546-566 (IFTWMPIIFTFMLASFPAGLV).

The protein belongs to the OXA1/ALB3/YidC family. Type 1 subfamily. In terms of assembly, interacts with the Sec translocase complex via SecD. Specifically interacts with transmembrane segments of nascent integral membrane proteins during membrane integration.

The protein resides in the cell inner membrane. In terms of biological role, required for the insertion and/or proper folding and/or complex formation of integral membrane proteins into the membrane. Involved in integration of membrane proteins that insert both dependently and independently of the Sec translocase complex, as well as at least some lipoproteins. Aids folding of multispanning membrane proteins. This chain is Membrane protein insertase YidC, found in Brucella melitensis biotype 1 (strain ATCC 23456 / CCUG 17765 / NCTC 10094 / 16M).